The chain runs to 54 residues: Light-harvesting protein B-880 beta chain (54 aa).

Over 1 to 20 (AEDRSSLSGVSDAEAKEFHA) the chain is Cytoplasmic. The a bacteriochlorophyll site is built by His19 and His37. Residues 21-43 (LFVSSFTAFIVIAVLAHVLAWAW) form a helical membrane-spanning segment. The Periplasmic segment spans residues 44–54 (RPWIPGPKGWA).

This sequence belongs to the antenna complex beta subunit family. In terms of assembly, the core complex is formed by different alpha and beta chains, binding bacteriochlorophyll molecules, and arranged most probably in tetrameric structures disposed around the reaction center. The non-pigmented gamma chains may constitute additional components.

It is found in the cell inner membrane. In terms of biological role, antenna complexes are light-harvesting systems, which transfer the excitation energy to the reaction centers. The chain is Light-harvesting protein B-880 beta chain from Rhodoblastus acidophilus (Rhodopseudomonas acidophila).